The chain runs to 1042 residues: Ubiquitin carboxyl-terminal hydrolase 38 (1042 aa).

A USP domain is found at 445–949 (TGLINLGNTC…TAYVLLYKKQ (505 aa)). Residue Cys-454 is the Nucleophile of the active site. His-857 serves as the catalytic Proton acceptor.

Belongs to the peptidase C19 family. In terms of assembly, interacts with isoform 1 of FBXW7; this interaction prevents FBXW7-mediated degradation of MYC. Highly expressed in skeletal muscle. Expressed in adrenal gland.

Its subcellular location is the cytoplasm. It is found in the nucleus. The catalysed reaction is Thiol-dependent hydrolysis of ester, thioester, amide, peptide and isopeptide bonds formed by the C-terminal Gly of ubiquitin (a 76-residue protein attached to proteins as an intracellular targeting signal).. Its function is as follows. Deubiquitinating enzyme that plays a role in various cellular processes, including DNA repair, cell cycle regulation, and immune response. Plays a role in the inhibition of type I interferon signaling by mediating the 'Lys-33' to 'Lys-48' ubiquitination transition of TBK1 leading to its degradation. Cleaves the ubiquitin chain from the histone demethylase LSD1/KDM1A and prevents it from degradation by the 26S proteasome, thus maintaining LSD1 protein level in cells. Plays a role in the DNA damage response by regulating the deacetylase activity of HDAC1. Mechanistically, removes the 'Lys-63'-linked ubiquitin chain promoting the deacetylase activity of HDAC1 in response to DNA damage. Also acts as a specific deubiquitinase of histone deacetylase 3/HDAC3 and cleaves its 'Lys-63'-linked ubiquitin chains to lower its histone deacetylase activity. Regulates MYC levels and cell proliferation via antagonizing ubiquitin E3 ligase FBXW7 thereby preventing MYC 'Lys-48'-linked ubiquitination and degradation. Participates in antiviral response by removing both 'Lys-48'-linked and 'Lys-63'-linked polyubiquitination of Zika virus envelope protein E. Constitutively associated with IL-33R/IL1RL1, deconjugates its 'Lys-27'-linked polyubiquitination resulting in its autophagic degradation. The sequence is that of Ubiquitin carboxyl-terminal hydrolase 38 (USP38) from Homo sapiens (Human).